The sequence spans 215 residues: Cardiolipin synthase (CMP-forming) (215 aa).

5 helical membrane-spanning segments follow: residues 29–49, 60–80, 117–137, 158–178, and 179–199; these read IPNI…WLIL, GWAL…GKLA, LWLT…VGIL, LMYA…ASLA, and AVFG…AGVL.

Belongs to the CDP-alcohol phosphatidyltransferase class-I family. Requires a divalent metal cation as cofactor.

It localises to the cell membrane. The enzyme catalyses a CDP-1,2-diacyl-sn-glycerol + a 1,2-diacyl-sn-glycero-3-phospho-(1'-sn-glycerol) = a cardiolipin + CMP + H(+). Functionally, catalyzes the synthesis of cardiolipin (CL) (diphosphatidylglycerol) by specifically transferring a phosphatidyl group from CDP-diacylglycerol to phosphatidylglycerol (PG). This Streptomyces coelicolor (strain ATCC BAA-471 / A3(2) / M145) protein is Cardiolipin synthase (CMP-forming).